A 91-amino-acid polypeptide reads, in one-letter code: C-C motif chemokine 5 (91 aa).

Residues 1 to 23 (MKISAAVLTVVLMAASLCAPASA) form the signal peptide. Disulfide bonds link Cys33–Cys57 and Cys34–Cys73.

This sequence belongs to the intercrine beta (chemokine CC) family.

The protein resides in the secreted. In terms of biological role, chemoattractant for blood monocytes, memory T-helper cells and eosinophils. Causes the release of histamine from basophils and activates eosinophils. May activate several chemokine receptors including CCR1, CCR3, CCR4 and CCR5. May also be an agonist of the G protein-coupled receptor GPR75. Together with GPR75, may play a role in neuron survival through activation of a downstream signaling pathway involving the PI3, Akt and MAP kinases. By activating GPR75 may also play a role in insulin secretion by islet cells. The chain is C-C motif chemokine 5 (CCL5) from Sigmodon hispidus (Hispid cotton rat).